A 153-amino-acid polypeptide reads, in one-letter code: Endoribonuclease YbeY (153 aa).

Zn(2+)-binding residues include histidine 114, histidine 118, and histidine 124.

The protein belongs to the endoribonuclease YbeY family. Requires Zn(2+) as cofactor.

The protein localises to the cytoplasm. Its function is as follows. Single strand-specific metallo-endoribonuclease involved in late-stage 70S ribosome quality control and in maturation of the 3' terminus of the 16S rRNA. The polypeptide is Endoribonuclease YbeY (Finegoldia magna (strain ATCC 29328 / DSM 20472 / WAL 2508) (Peptostreptococcus magnus)).